A 352-amino-acid chain; its full sequence is Sphingosine 1-phosphate receptor 2 (352 aa).

Residues 1–34 (MGGLYSEYLNPEKVQEHYNYTKETLDMQETPSRK) are Extracellular-facing. N-linked (GlcNAc...) asparagine glycosylation is present at N19. Residues 35-59 (VASAFIIILCCAIVVENLLVLIAVA) form a helical membrane-spanning segment. The Cytoplasmic portion of the chain corresponds to 60 to 66 (RNSKFHS). A helical transmembrane segment spans residues 67–95 (AMYLFLGNLAASDLLAGVAFVANTLLSGP). The Extracellular portion of the chain corresponds to 96–109 (VTLSLTPLQWFARE). Residues 110 to 128 (GSAFITLSASVFSLLAIAI) traverse the membrane as a helical segment. The Cytoplasmic portion of the chain corresponds to 129–147 (ERQVAIAKVKLYGSDKSCR). Residues 148 to 173 (MLMLIGASWLISLILGGLPILGWNCL) traverse the membrane as a helical segment. Topologically, residues 174 to 189 (DHLEACSTVLPLYAKH) are extracellular. The helical transmembrane segment at 190–210 (YVLCVVTIFSVILLAIVALYV) threads the bilayer. The Cytoplasmic segment spans residues 211–233 (RIYFVVRSSHADVAGPQTLALLK). A helical membrane pass occupies residues 234-255 (TVTIVLGVFIICWLPAFSILLL). Residues 256–271 (DSTCPVRACPVLYKAH) lie on the Extracellular side of the membrane. The chain crosses the membrane as a helical span at residues 272–292 (YFFAFATLNSLLNPVIYTWRS). Residues 293–352 (RDLRREVLRPLLCWRQGKGATGRRGGNPGHRLLPLRSSSSLERGLHMPTSPTFLEGNTVV) lie on the Cytoplasmic side of the membrane. A lipid anchor (S-palmitoyl cysteine) is attached at C305.

Belongs to the G-protein coupled receptor 1 family. Expressed in all developing tissues with highest levels detected in primitive, transformed cells. Relative abundance: lung &gt; kidney = skin = gut &gt; spleen &gt; brain &gt; liver.

The protein localises to the cell membrane. In terms of biological role, receptor for the lysosphingolipid sphingosine 1-phosphate (S1P). S1P is a bioactive lysophospholipid that elicits diverse physiological effects on most types of cells and tissues. Receptor for the chemokine-like protein FAM19A5. Mediates the inhibitory effect of FAM19A5 on vascular smooth muscle cell proliferation and migration. In lymphoid follicles, couples the binding of S1P to the activation of GNA13 and downstream inhibition of AKT activation leading to suppression of germinal center (GC) B cell growth and migration outside the GC niche. In Rattus norvegicus (Rat), this protein is Sphingosine 1-phosphate receptor 2 (S1pr2).